The primary structure comprises 467 residues: Cytochrome c-552 (467 aa).

Residues 1-27 (MMKKMTGKSFALSALVAASFMAAGAMA) form the signal peptide. A heme c-binding site is contributed by H87. Heme is bound by residues C115, C118, and K119. Positions 153, 156, 157, 195, 198, and 199 each coordinate heme c. Ca(2+) is bound by residues E201, Y202, K250, and Q252. Residue Y202 participates in substrate binding. H253 is a substrate binding site. Heme c contacts are provided by H264, C271, C274, H275, H290, C303, C306, H307, and H382.

Belongs to the cytochrome c-552 family. Ca(2+) is required as a cofactor. The cofactor is heme c.

The protein resides in the periplasm. It catalyses the reaction 6 Fe(III)-[cytochrome c] + NH4(+) + 2 H2O = 6 Fe(II)-[cytochrome c] + nitrite + 8 H(+). The protein operates within nitrogen metabolism; nitrate reduction (assimilation). Functionally, catalyzes the reduction of nitrite to ammonia, consuming six electrons in the process. The sequence is that of Cytochrome c-552 from Shewanella sp. (strain MR-4).